We begin with the raw amino-acid sequence, 975 residues long: DNA primase (975 aa).

Residues 919–958 (CIQHDHRDGRENVQFFLDFRPESATTIWTTLWSRCFSRKC) form a CHC2-type zinc finger.

This sequence belongs to the herpesviridae DNA primase family. In terms of assembly, associates with the helicase and the primase-associated factor to form the helicase-primase factor.

It localises to the host nucleus. Functionally, essential component of the helicase/primase complex. Unwinds the DNA at the replication forks and generates single-stranded DNA for both leading and lagging strand synthesis. The primase initiates primer synthesis and thereby produces large amount of short RNA primers on the lagging strand that the polymerase elongates using dNTPs. This is DNA primase from Elephas maximus (Indian elephant).